The following is a 208-amino-acid chain: Protein GrpE (208 aa).

Basic and acidic residues predominate over residues 1-27 (MERMNQSRKVPIHDAAEESSAEAHETQ). A disordered region spans residues 1–65 (MERMNQSRKV…AEEAQEEEAA (65 aa)). Over residues 45–64 (MAEEAVEQAQDAEEAQEEEA) the composition is skewed to acidic residues.

This sequence belongs to the GrpE family. Homodimer.

Its subcellular location is the cytoplasm. Its function is as follows. Participates actively in the response to hyperosmotic and heat shock by preventing the aggregation of stress-denatured proteins, in association with DnaK and GrpE. It is the nucleotide exchange factor for DnaK and may function as a thermosensor. Unfolded proteins bind initially to DnaJ; upon interaction with the DnaJ-bound protein, DnaK hydrolyzes its bound ATP, resulting in the formation of a stable complex. GrpE releases ADP from DnaK; ATP binding to DnaK triggers the release of the substrate protein, thus completing the reaction cycle. Several rounds of ATP-dependent interactions between DnaJ, DnaK and GrpE are required for fully efficient folding. This is Protein GrpE from Desulfatibacillum aliphaticivorans.